The following is a 363-amino-acid chain: Ly6/PLAUR domain-containing protein 3 (363 aa).

An N-terminal signal peptide occupies residues 1-32 (MDAARRGDTQPVMWTTGWLLLLPLLLCEGAQA). Residues 35-128 (CYSCVQKADD…LNLTLRGLNP (94 aa)) enclose the UPAR/Ly6 1 domain. Residues asparagine 120, asparagine 131, asparagine 178, and asparagine 185 are each glycosylated (N-linked (GlcNAc...) asparagine). Residues 142-224 (CYSCVGLSRE…GSCCQGPRCN (83 aa)) form the UPAR/Ly6 2 domain. The segment covering 238-248 (PPLVLLPPPTT) has biased composition (pro residues). Disordered regions lie at residues 238 to 287 (PPLV…TSPH) and 301 to 336 (LSGGAAGHGGTAGHGGAAGHQDRSNMEKYPGKGGAQ). Low complexity predominate over residues 249–278 (AAPSTRAQNSSSTTSTAAPTTTTSIIKPTT). Residues 304 to 318 (GAAGHGGTAGHGGAA) are compositionally biased toward gly residues. The segment covering 320–330 (HQDRSNMEKYP) has biased composition (basic and acidic residues). Serine 343 carries the GPI-anchor amidated serine lipid modification. Residues 344-363 (GTLGSWLSAVLLTVVAGAML) constitute a propeptide, removed in mature form.

As to quaternary structure, binds laminin-1 and laminin-5. Interacts with LGALS3. Interacts with AGR2 and AGR3.

The protein localises to the cell membrane. Functionally, supports cell migration. May be involved in tumor progression. The protein is Ly6/PLAUR domain-containing protein 3 (Lypd3) of Mus musculus (Mouse).